Here is a 561-residue protein sequence, read N- to C-terminus: Dihydroxy-acid dehydratase (561 aa).

Residue C50 coordinates [2Fe-2S] cluster. D82 contacts Mg(2+). C123 is a [2Fe-2S] cluster binding site. Mg(2+) is bound by residues D124 and K125. At K125 the chain carries N6-carboxylysine. C195 contacts [2Fe-2S] cluster. Residue E447 coordinates Mg(2+). The active-site Proton acceptor is the S473.

This sequence belongs to the IlvD/Edd family. Homodimer. [2Fe-2S] cluster serves as cofactor. Requires Mg(2+) as cofactor.

It carries out the reaction (2R)-2,3-dihydroxy-3-methylbutanoate = 3-methyl-2-oxobutanoate + H2O. The catalysed reaction is (2R,3R)-2,3-dihydroxy-3-methylpentanoate = (S)-3-methyl-2-oxopentanoate + H2O. The protein operates within amino-acid biosynthesis; L-isoleucine biosynthesis; L-isoleucine from 2-oxobutanoate: step 3/4. It functions in the pathway amino-acid biosynthesis; L-valine biosynthesis; L-valine from pyruvate: step 3/4. Functions in the biosynthesis of branched-chain amino acids. Catalyzes the dehydration of (2R,3R)-2,3-dihydroxy-3-methylpentanoate (2,3-dihydroxy-3-methylvalerate) into 2-oxo-3-methylpentanoate (2-oxo-3-methylvalerate) and of (2R)-2,3-dihydroxy-3-methylbutanoate (2,3-dihydroxyisovalerate) into 2-oxo-3-methylbutanoate (2-oxoisovalerate), the penultimate precursor to L-isoleucine and L-valine, respectively. The polypeptide is Dihydroxy-acid dehydratase (Trichodesmium erythraeum (strain IMS101)).